Here is a 212-residue protein sequence, read N- to C-terminus: Uridine kinase (212 aa).

Position 13–20 (13–20 (GGSGSGKT)) interacts with ATP.

This sequence belongs to the uridine kinase family.

It localises to the cytoplasm. The enzyme catalyses uridine + ATP = UMP + ADP + H(+). It catalyses the reaction cytidine + ATP = CMP + ADP + H(+). The protein operates within pyrimidine metabolism; CTP biosynthesis via salvage pathway; CTP from cytidine: step 1/3. It functions in the pathway pyrimidine metabolism; UMP biosynthesis via salvage pathway; UMP from uridine: step 1/1. This chain is Uridine kinase, found in Bacillus thuringiensis (strain Al Hakam).